The sequence spans 240 residues: Glutamine amidotransferase-like protein chry6 (240 aa).

The region spanning 13–205 is the Glutamine amidotransferase type-1 domain; that stretch reads NFILDDTGGR…FVASDNPVLV (193 aa). Cys102 functions as the Nucleophile in the catalytic mechanism. Active-site residues include His185 and Glu187.

This sequence belongs to the peptidase C26 family.

Its pathway is pigment biosynthesis. Glutamine amidotransferase-like protein; part of the gene cluster that mediates the biosynthesis of the yellow pigment chrysogine. Pyruvic acid and anthranilic acid are likely substrates for the nonribosomal peptide synthetase chry1/NRPS14, with pyruvic acid adenylated by the first A domain and anthranilic acid by the second. If pyruvic acid and anthranilic acid are merged and released from chry1/NRPS14 by hydrolysis, a subsequent amidation would lead to 2-pyruvoylaminobenzamide. This process is probably catalyzed by the amidotransferase chry2 using glutamine as amino donor. The dehydrogenase chry5 that has a terminal berberine bridge domain for C-N cyclization could catalyze the cyclization of 2-pyruvoylaminobenzamide to yield acetyl-4(3H)-quinazolidinone. A final reduction of acetyl-4(3H)-quinazolidinone catalyzed by the oxidoreductase chry4 would result in chrysogine. In Gibberella zeae (strain ATCC MYA-4620 / CBS 123657 / FGSC 9075 / NRRL 31084 / PH-1) (Wheat head blight fungus), this protein is Glutamine amidotransferase-like protein chry6.